A 643-amino-acid polypeptide reads, in one-letter code: Replication protein E1 (643 aa).

The Nuclear localization signal motif lies at 83 to 85 (KRK). Phosphoserine; by host occurs at positions 89, 93, and 107. Positions 106-115 (LSPRLGGLTL) match the Nuclear export signal motif. The interval 155–184 (AVHGTMGNGGAVGSELGVQENEEGSTTSTP) is disordered. The DNA-binding region stretch occupies residues 180 to 346 (TTSTPTTRVV…QTILEHCFAD (167 aa)). Residues 445-595 (IDFLAFMSAF…FPLDTNGNPV (151 aa)) form the SF3 helicase domain. 471 to 478 (GPPNTGKS) contributes to the ATP binding site. Residue Lys552 forms a Glycyl lysine isopeptide (Lys-Gly) (interchain with G-Cter in SUMO) linkage.

This sequence belongs to the papillomaviridae E1 protein family. Can form hexamers. Interacts with E2 protein; this interaction increases E1 DNA binding specificity. Interacts with host DNA polymerase subunit POLA2. Interacts with host single stranded DNA-binding protein RPA1. Interacts with host TOP1; this interaction stimulates the enzymatic activity of TOP1. Phosphorylated. In terms of processing, sumoylated.

Its subcellular location is the host nucleus. It catalyses the reaction Couples ATP hydrolysis with the unwinding of duplex DNA by translocating in the 3'-5' direction.. The enzyme catalyses ATP + H2O = ADP + phosphate + H(+). Functionally, ATP-dependent DNA 3'-5' helicase required for initiation of viral DNA replication. It forms a complex with the viral E2 protein. The E1-E2 complex binds to the replication origin which contains binding sites for both proteins. During the initial step, a dimer of E1 interacts with a dimer of protein E2 leading to a complex that binds the viral origin of replication with high specificity. Then, a second dimer of E1 displaces the E2 dimer in an ATP-dependent manner to form the E1 tetramer. Following this, two E1 monomers are added to each half of the site, which results in the formation of two E1 trimers on the viral ori. Subsequently, two hexamers will be created. The double hexamer acts as a bi-directional helicase machinery and unwinds the viral DNA and then recruits the host DNA polymerase to start replication. In Human papillomavirus 42, this protein is Replication protein E1.